Here is a 938-residue protein sequence, read N- to C-terminus: Protein NLP3 (938 aa).

2 disordered regions span residues 1-26 and 557-597; these read MEVD…GGGD and LADD…KAEK. Over residues 12 to 26 the composition is skewed to gly residues; that stretch reads AGEGGGGGIGGGGGD. Over residues 580-597 the composition is skewed to basic and acidic residues; the sequence is SLHKSNKPPERRRGKAEK. The region spanning 585-666 is the RWP-RK domain; that stretch reads NKPPERRRGK…IESVQGSDAA (82 aa). A coiled-coil region spans residues 640 to 662; sequence SRKINKVNRSLSKLKQVIESVQG. The tract at residues 743–769 is disordered; sequence DKASHSRSSSGEGSINSRTSEASCHGS. The segment covering 748-762 has biased composition (low complexity); it reads SRSSSGEGSINSRTS. The 80-residue stretch at 847–926 folds into the PB1 domain; it reads TVTIKASFKE…HVIRLLVSDV (80 aa).

The protein resides in the nucleus. Its function is as follows. Probable transcription factor. In Oryza sativa subsp. japonica (Rice), this protein is Protein NLP3 (NLP3).